The chain runs to 203 residues: MANPIEEQLATNLYFDKTFNCEAAKILPGEYYTTNQDIVIVTVLGSCVSACIRDKVSGIGGMNHFMLPEGNPADANNPVSESARYGTYAMEVLINQLLKNGARRENLEAKIFGGGNVLSGFTAINIGEKNAAFVRKYLRDENIRVVGEDLNDIYPRKVYFFPRTGRVLVKKLKQMHNNTLISREESYAKRLKANKVAGEVELF.

Belongs to the CheD family.

The catalysed reaction is L-glutaminyl-[protein] + H2O = L-glutamyl-[protein] + NH4(+). In terms of biological role, probably deamidates glutamine residues to glutamate on methyl-accepting chemotaxis receptors (MCPs), playing an important role in chemotaxis. The polypeptide is Probable chemoreceptor glutamine deamidase CheD (Methylobacillus flagellatus (strain ATCC 51484 / DSM 6875 / VKM B-1610 / KT)).